A 287-amino-acid chain; its full sequence is MAGAKEIRSKIASVQNTQKITKAMEMVAASKMRKSQDRMAASRPYAETMRKVIGHLANGNLEYKHPYLEERDVKRVGYLVVSTDRGLCGGLNINLFKKLLADMKAWSDKGVQCELAMIGSKGVSFFNSVGGNVVAQVTGMGDNPSLSELIGPVKVMLQAYDEGRLDKLYIVSNKFINTMSQVPTITQLLPLPASEDDDLKRTAWDYLYEPDPKALLDTLLRRYVESQVYQGVVENLASEQAARMVAMKAATDNGGSLIKELQLVYNKARQASITQELTEIVSGAAAV.

The protein belongs to the ATPase gamma chain family. F-type ATPases have 2 components, CF(1) - the catalytic core - and CF(0) - the membrane proton channel. CF(1) has five subunits: alpha(3), beta(3), gamma(1), delta(1), epsilon(1). CF(0) has three main subunits: a, b and c.

The protein localises to the cell inner membrane. In terms of biological role, produces ATP from ADP in the presence of a proton gradient across the membrane. The gamma chain is believed to be important in regulating ATPase activity and the flow of protons through the CF(0) complex. This chain is ATP synthase gamma chain, found in Salmonella paratyphi A (strain ATCC 9150 / SARB42).